The sequence spans 260 residues: Carbonic anhydrase 2 (260 aa).

Ser2 bears the N-acetylserine mark. Ser2 is subject to Phosphoserine. The Alpha-carbonic anhydrase domain occupies 3 to 259 (HHWGYGKHNG…LKNRQIKASF (257 aa)). His64 functions as the Proton donor/acceptor in the catalytic mechanism. Residues His94, His96, and His119 each coordinate Zn(2+). 2 positions are modified to phosphoserine: Ser165 and Ser172. Residue 198-199 (TT) coordinates substrate.

Belongs to the alpha-carbonic anhydrase family. In terms of assembly, interacts with SLC4A4. Interaction with SLC4A7 regulates SLC4A7 transporter activity. Interacts with SLC26A6 isoform 4 (via C-terminus cytoplasmic domain). The cofactor is Zn(2+). Co(2+) is required as a cofactor.

The protein localises to the cytoplasm. The protein resides in the cell membrane. It catalyses the reaction hydrogencarbonate + H(+) = CO2 + H2O. The catalysed reaction is urea = cyanamide + H2O. Its activity is regulated as follows. Activated by X-ray, histamine, L-adrenaline, L- and D-phenylalanine, L- and D-histidine, L-His-OMe and beta-Ala-His (carnosine). Competitively inhibited by saccharin, thioxolone, coumarins, 667-coumate, celecoxib (Celebrex), valdecoxib (Bextra), SC-125, SC-560, diclofenac, acetate, azide, bromide, sulfonamide derivatives such as acetazolamide (AZA), methazolamide (MZA), ethoxzolamide (EZA), dichlorophenamide (DCP), brinzolamide, dansylamide, thiabendazole-5-sulfonamide, trifluoromethane sulfonamide and N-hydroxysulfamide, fructose-based sugar sulfamate RWJ-37497, and Foscarnet (phosphonoformate trisodium salt). Repressed strongly by hydrogen sulfide(HS) and weakly by nitrate (NO(3)). Esterase activity weakly reduced by cyanamide. N-hydroxyurea interferes with zinc binding and inhibit activity. In terms of biological role, catalyzes the reversible hydration of carbon dioxide. Can also hydrate cyanamide to urea. Stimulates the chloride-bicarbonate exchange activity of SLC26A6. Essential for bone resorption and osteoclast differentiation. Involved in the regulation of fluid secretion into the anterior chamber of the eye. Contributes to intracellular pH regulation in the duodenal upper villous epithelium during proton-coupled peptide absorption. The chain is Carbonic anhydrase 2 (CA2) from Homo sapiens (Human).